The chain runs to 304 residues: UDP-N-acetylenolpyruvoylglucosamine reductase (304 aa).

Residues 33 to 198 (RVGGPVDILL…ITATFCFESG (166 aa)) form the FAD-binding PCMH-type domain. Arg177 is a catalytic residue. Residue Ser227 is the Proton donor of the active site. Residue Glu297 is part of the active site.

The protein belongs to the MurB family. Requires FAD as cofactor.

The protein resides in the cytoplasm. The catalysed reaction is UDP-N-acetyl-alpha-D-muramate + NADP(+) = UDP-N-acetyl-3-O-(1-carboxyvinyl)-alpha-D-glucosamine + NADPH + H(+). It functions in the pathway cell wall biogenesis; peptidoglycan biosynthesis. In terms of biological role, cell wall formation. This is UDP-N-acetylenolpyruvoylglucosamine reductase from Clostridium botulinum (strain Eklund 17B / Type B).